Reading from the N-terminus, the 963-residue chain is Aminopeptidase N (963 aa).

Residues 2–8 lie on the Cytoplasmic side of the membrane; the sequence is AKGFYIS. A helical; Signal-anchor for type II membrane protein transmembrane segment spans residues 9–32; the sequence is KALGILGILLGVAAVATIIALSVV. The cytosolic Ser/Thr-rich junction stretch occupies residues 33–64; sequence YAQEKNKNAEHVPQAPTSPTITTTAAITLDQS. At 33–963 the chain is on the extracellular side; the sequence is YAQEKNKNAE…VVLNWFIEHS (931 aa). Positions 65 to 963 are metalloprotease; it reads KPWNRYRLPT…VVLNWFIEHS (899 aa). N-linked (GlcNAc...) asparagine glycans are attached at residues asparagine 82 and asparagine 124. At tyrosine 171 the chain carries Sulfotyrosine. 6 N-linked (GlcNAc...) asparagine glycosylation sites follow: asparagine 229, asparagine 237, asparagine 258, asparagine 286, asparagine 314, and asparagine 328. 347-351 is a binding site for substrate; that stretch reads GAMEN. Histidine 383 lines the Zn(2+) pocket. Glutamate 384 acts as the Proton acceptor in catalysis. Histidine 387 and glutamate 406 together coordinate Zn(2+). N-linked (GlcNAc...) asparagine glycosylation is found at asparagine 506, asparagine 556, asparagine 569, asparagine 622, asparagine 646, and asparagine 736. Residues 717–813 form an interaction with TGEV spike glycoprotein region; sequence KYLRKQVEPL…DQWDFAWGQL (97 aa). 2 disulfides stabilise this stretch: cysteine 758-cysteine 765 and cysteine 795-cysteine 831.

Belongs to the peptidase M1 family. In terms of assembly, homodimer. Interacts with SLC6A19. (Microbial infection) Interacts with TGEV and PRCoV spike glycoprotein. It depends on Zn(2+) as a cofactor. Post-translationally, sulfated. N- and O-glycosylated. In terms of processing, may undergo proteolysis and give rise to a soluble form.

The protein resides in the cell membrane. It carries out the reaction Release of an N-terminal amino acid, Xaa-|-Yaa- from a peptide, amide or arylamide. Xaa is preferably Ala, but may be most amino acids including Pro (slow action). When a terminal hydrophobic residue is followed by a prolyl residue, the two may be released as an intact Xaa-Pro dipeptide.. Its function is as follows. Broad specificity aminopeptidase which plays a role in the final digestion of peptides generated from hydrolysis of proteins by gastric and pancreatic proteases. Also involved in the processing of various peptides including peptide hormones, such as angiotensin III and IV, neuropeptides, and chemokines. May also be involved the cleavage of peptides bound to major histocompatibility complex class II molecules of antigen presenting cells. May have a role in angiogenesis and promote cholesterol crystallization. It is able to degrade Leu-enkephalin and Met-enkephalin but not cholecystokinin CCK8, neuromedin C (GRP-10), somatostatin-14, substance P and vasoactive intestinal peptide. May have a role in amino acid transport by acting as binding partner of amino acid transporter SLC6A19 and regulating its activity. Functionally, (Microbial infection) In case of porcine transmissible gastroenteritis coronavirus (TGEV) and porcine respiratory coronavirus (PRCoV) infections, serves as a receptor for TGEV and PRCoV spike glycoprotein in a species-specific manner. The sequence is that of Aminopeptidase N (ANPEP) from Sus scrofa (Pig).